The following is a 232-amino-acid chain: uncharacterized protein (232 aa).

Transmembrane regions (helical) follow at residues Leu4 to Glu24, Val42 to Leu62, Leu100 to Met120, Leu145 to Leu165, and Gly171 to Phe191.

The protein resides in the cell membrane. This is an uncharacterized protein from Aquifex aeolicus (strain VF5).